Here is a 370-residue protein sequence, read N- to C-terminus: tRNA 2-selenouridine synthase (370 aa).

One can recognise a Rhodanese domain in the interval 12–136; that stretch reads FLEDVPMMDT…MRNFLLDTTR (125 aa). Residue C95 is the S-selanylcysteine intermediate of the active site.

It belongs to the SelU family. As to quaternary structure, monomer.

The enzyme catalyses 5-methylaminomethyl-2-thiouridine(34) in tRNA + selenophosphate + (2E)-geranyl diphosphate + H2O + H(+) = 5-methylaminomethyl-2-selenouridine(34) in tRNA + (2E)-thiogeraniol + phosphate + diphosphate. It catalyses the reaction 5-methylaminomethyl-2-thiouridine(34) in tRNA + (2E)-geranyl diphosphate = 5-methylaminomethyl-S-(2E)-geranyl-thiouridine(34) in tRNA + diphosphate. It carries out the reaction 5-methylaminomethyl-S-(2E)-geranyl-thiouridine(34) in tRNA + selenophosphate + H(+) = 5-methylaminomethyl-2-(Se-phospho)selenouridine(34) in tRNA + (2E)-thiogeraniol. The catalysed reaction is 5-methylaminomethyl-2-(Se-phospho)selenouridine(34) in tRNA + H2O = 5-methylaminomethyl-2-selenouridine(34) in tRNA + phosphate. Its function is as follows. Involved in the post-transcriptional modification of the uridine at the wobble position (U34) of tRNA(Lys), tRNA(Glu) and tRNA(Gln). Catalyzes the conversion of 2-thiouridine (S2U-RNA) to 2-selenouridine (Se2U-RNA). Acts in a two-step process involving geranylation of 2-thiouridine (S2U) to S-geranyl-2-thiouridine (geS2U) and subsequent selenation of the latter derivative to 2-selenouridine (Se2U) in the tRNA chain. The protein is tRNA 2-selenouridine synthase of Azotobacter vinelandii (strain DJ / ATCC BAA-1303).